The following is a 283-amino-acid chain: Phosphatidylserine decarboxylase proenzyme (283 aa).

Active-site charge relay system; for autoendoproteolytic cleavage activity residues include D90, H143, and S248. S248 functions as the Schiff-base intermediate with substrate; via pyruvic acid; for decarboxylase activity in the catalytic mechanism. S248 bears the Pyruvic acid (Ser); by autocatalysis mark.

Belongs to the phosphatidylserine decarboxylase family. PSD-B subfamily. Prokaryotic type I sub-subfamily. Heterodimer of a large membrane-associated beta subunit and a small pyruvoyl-containing alpha subunit. It depends on pyruvate as a cofactor. Is synthesized initially as an inactive proenzyme. Formation of the active enzyme involves a self-maturation process in which the active site pyruvoyl group is generated from an internal serine residue via an autocatalytic post-translational modification. Two non-identical subunits are generated from the proenzyme in this reaction, and the pyruvate is formed at the N-terminus of the alpha chain, which is derived from the carboxyl end of the proenzyme. The autoendoproteolytic cleavage occurs by a canonical serine protease mechanism, in which the side chain hydroxyl group of the serine supplies its oxygen atom to form the C-terminus of the beta chain, while the remainder of the serine residue undergoes an oxidative deamination to produce ammonia and the pyruvoyl prosthetic group on the alpha chain. During this reaction, the Ser that is part of the protease active site of the proenzyme becomes the pyruvoyl prosthetic group, which constitutes an essential element of the active site of the mature decarboxylase.

The protein resides in the cell membrane. It catalyses the reaction a 1,2-diacyl-sn-glycero-3-phospho-L-serine + H(+) = a 1,2-diacyl-sn-glycero-3-phosphoethanolamine + CO2. The protein operates within phospholipid metabolism; phosphatidylethanolamine biosynthesis; phosphatidylethanolamine from CDP-diacylglycerol: step 2/2. Catalyzes the formation of phosphatidylethanolamine (PtdEtn) from phosphatidylserine (PtdSer). This is Phosphatidylserine decarboxylase proenzyme from Francisella tularensis subsp. novicida (strain U112).